The chain runs to 558 residues: Ribonuclease Y (558 aa).

Residues Val-3 to Phe-23 form a helical membrane-spanning segment. The region spanning Thr-248–Leu-311 is the KH domain. One can recognise an HD domain in the interval Val-374–Ala-467.

The protein belongs to the RNase Y family.

Its subcellular location is the cell membrane. Endoribonuclease that initiates mRNA decay. This is Ribonuclease Y from Aquifex aeolicus (strain VF5).